We begin with the raw amino-acid sequence, 214 residues long: Adenylate kinase (214 aa).

10–15 (GAGKGT) provides a ligand contact to ATP. Residues 30–59 (STGDMLRAAIKAGTELGKQAKSVIDAGQLV) form an NMP region. AMP-binding positions include Thr31, Arg36, 57 to 59 (QLV), 85 to 88 (GFPR), and Gln92. Positions 122–159 (GRRAHLPSGRTYHVVYNPPKEEGKDDETGEPLVIREDD) are LID. ATP is bound by residues Arg123 and 132-133 (TY). Residues Arg156 and Arg167 each contribute to the AMP site. Position 200 (Lys200) interacts with ATP.

This sequence belongs to the adenylate kinase family. As to quaternary structure, monomer.

The protein localises to the cytoplasm. It carries out the reaction AMP + ATP = 2 ADP. The protein operates within purine metabolism; AMP biosynthesis via salvage pathway; AMP from ADP: step 1/1. Catalyzes the reversible transfer of the terminal phosphate group between ATP and AMP. Plays an important role in cellular energy homeostasis and in adenine nucleotide metabolism. This chain is Adenylate kinase, found in Aliivibrio fischeri (strain ATCC 700601 / ES114) (Vibrio fischeri).